The primary structure comprises 594 residues: UvrABC system protein C (594 aa).

A GIY-YIG domain is found at 13-99 (NSSGVYQYFD…IKQLKPKYNI (87 aa)). Residues 205 to 240 (DRLIKELELKMERLSNNLRFEEALIYRDRIAKIQKI) enclose the UVR domain.

Belongs to the UvrC family. In terms of assembly, interacts with UvrB in an incision complex.

Its subcellular location is the cytoplasm. Functionally, the UvrABC repair system catalyzes the recognition and processing of DNA lesions. UvrC both incises the 5' and 3' sides of the lesion. The N-terminal half is responsible for the 3' incision and the C-terminal half is responsible for the 5' incision. The polypeptide is UvrABC system protein C (Helicobacter pylori (strain ATCC 700392 / 26695) (Campylobacter pylori)).